We begin with the raw amino-acid sequence, 308 residues long: Reaction center protein M chain (308 aa).

A run of 3 helical transmembrane segments spans residues 54-80 (GSLGVLSLFSGLMWFFTIGIWFWYQAG), 111-140 (KEGGLWLIASFFMFVAVWSWWGRTYLRAQA), and 143-168 (MGKHTAWAFLSAIWLWMVLGFIRPIL). The (7R,8Z)-bacteriochlorophyll b site is built by His-183 and His-203. Residues 198–226 (FYNPFHGLSIAFLYGSALLFAMHGATILA) form a helical membrane-spanning segment. Residues His-220 and Glu-235 each coordinate Fe cation. Residue Trp-253 coordinates a ubiquinone. A helical membrane pass occupies residues 260-286 (NATMEGIHRWAIWMAVLVTLTGGIGIL). Position 267 (His-267) interacts with Fe cation.

Belongs to the reaction center PufL/M/PsbA/D family. In terms of assembly, reaction center is composed of four bacteriochlorophylls, two bacteriopheophytins, two ubiquinones, one iron, and three highly hydrophobic polypeptide chains (designated L, M, and H).

The protein resides in the cellular chromatophore membrane. In terms of biological role, the reaction center is a membrane-bound complex that mediates the initial photochemical event in the electron transfer process of photosynthesis. This Cereibacter sphaeroides (strain ATCC 17023 / DSM 158 / JCM 6121 / CCUG 31486 / LMG 2827 / NBRC 12203 / NCIMB 8253 / ATH 2.4.1.) (Rhodobacter sphaeroides) protein is Reaction center protein M chain (pufM).